Reading from the N-terminus, the 290-residue chain is ATP synthase gamma chain (290 aa).

Belongs to the ATPase gamma chain family. As to quaternary structure, F-type ATPases have 2 components, CF(1) - the catalytic core - and CF(0) - the membrane proton channel. CF(1) has five subunits: alpha(3), beta(3), gamma(1), delta(1), epsilon(1). CF(0) has three main subunits: a, b and c.

The protein localises to the cell inner membrane. In terms of biological role, produces ATP from ADP in the presence of a proton gradient across the membrane. The gamma chain is believed to be important in regulating ATPase activity and the flow of protons through the CF(0) complex. This Phenylobacterium zucineum (strain HLK1) protein is ATP synthase gamma chain.